The chain runs to 149 residues: Calmodulin (149 aa).

Ala-2 carries the post-translational modification N-acetylalanine. 4 consecutive EF-hand domains span residues 8–43 (EQVS…LGQN), 44–79 (PSES…KMKD), 81–116 (DSEE…IGEK), and 117–149 (LTDD…MMQK). Residues Asp-21, Asp-23, Asp-25, Gln-27, Glu-32, Asp-57, Asp-59, Asn-61, Thr-63, Glu-68, Asp-94, Asp-96, Asn-98, Glu-105, Asp-130, Asp-132, Asp-134, Arg-136, and Glu-141 each contribute to the Ca(2+) site.

Belongs to the calmodulin family.

In terms of biological role, calmodulin mediates the control of a large number of enzymes, ion channels and other proteins by Ca(2+). Among the enzymes to be stimulated by the calmodulin-Ca(2+) complex are a number of protein kinases and phosphatases. This chain is Calmodulin, found in Colletotrichum gloeosporioides (Anthracnose fungus).